Consider the following 475-residue polypeptide: Ribulose bisphosphate carboxylase large chain (475 aa).

Positions 1–2 (MS) are excised as a propeptide. The residue at position 3 (Pro3) is an N-acetylproline. Lys14 bears the N6,N6,N6-trimethyllysine mark. 2 residues coordinate substrate: Asn123 and Thr173. Catalysis depends on Lys175, which acts as the Proton acceptor. Lys177 is a binding site for substrate. Residues Lys201, Asp203, and Glu204 each coordinate Mg(2+). Lys201 is subject to N6-carboxylysine. The Proton acceptor role is filled by His294. Positions 295, 327, and 379 each coordinate substrate.

Belongs to the RuBisCO large chain family. Type I subfamily. As to quaternary structure, heterohexadecamer of 8 large chains and 8 small chains; disulfide-linked. The disulfide link is formed within the large subunit homodimers. Mg(2+) serves as cofactor. Post-translationally, the disulfide bond which can form in the large chain dimeric partners within the hexadecamer appears to be associated with oxidative stress and protein turnover.

The protein resides in the plastid. Its subcellular location is the chloroplast. The catalysed reaction is 2 (2R)-3-phosphoglycerate + 2 H(+) = D-ribulose 1,5-bisphosphate + CO2 + H2O. It carries out the reaction D-ribulose 1,5-bisphosphate + O2 = 2-phosphoglycolate + (2R)-3-phosphoglycerate + 2 H(+). RuBisCO catalyzes two reactions: the carboxylation of D-ribulose 1,5-bisphosphate, the primary event in carbon dioxide fixation, as well as the oxidative fragmentation of the pentose substrate in the photorespiration process. Both reactions occur simultaneously and in competition at the same active site. This Chlorokybus atmophyticus (Soil alga) protein is Ribulose bisphosphate carboxylase large chain.